Consider the following 316-residue polypeptide: Ribosomal RNA small subunit methyltransferase H (316 aa).

S-adenosyl-L-methionine contacts are provided by residues 35–37 (SGH), aspartate 55, phenylalanine 84, aspartate 105, and glutamine 112.

It belongs to the methyltransferase superfamily. RsmH family.

It localises to the cytoplasm. The enzyme catalyses cytidine(1402) in 16S rRNA + S-adenosyl-L-methionine = N(4)-methylcytidine(1402) in 16S rRNA + S-adenosyl-L-homocysteine + H(+). In terms of biological role, specifically methylates the N4 position of cytidine in position 1402 (C1402) of 16S rRNA. The chain is Ribosomal RNA small subunit methyltransferase H from Streptococcus pyogenes serotype M49 (strain NZ131).